The following is a 602-amino-acid chain: ATP-dependent DNA helicase II subunit 1 (602 aa).

Positions 268 to 483 constitute a Ku domain; the sequence is FQCPLILDEK…YDNMKKVTQS (216 aa). Ser370, Ser371, and Ser372 each carry phosphoserine.

The protein belongs to the ku70 family. As to quaternary structure, heterodimer of YKU70/HDF1 and YKU80/HDF2. Post-translationally, sumoylated by MMS21.

Its subcellular location is the nucleus. The protein localises to the chromosome. The protein resides in the telomere. The enzyme catalyses ATP + H2O = ADP + phosphate + H(+). Its function is as follows. Single-stranded DNA-dependent ATP-dependent helicase. Involved in non-homologous end joining (NHEJ) DNA double strand break repair. DNA-binding is sequence-independent but has a high affinity to nicks in double-stranded DNA and to the ends of duplex DNA. Binds to naturally occurring chromosomal ends, and therefore provides chromosomal end protection. Appears to have a role in recruitment of telomerase and CDC13 to the telomere and the subsequent telomere elongation. Required also for telomere recombination to repair telomeric ends in the absence of telomerase. KU70, of the KU70/KU80 heterodimer, binds to the stem loop of TLC1, the RNA component of telomerase. Involved in telomere maintenance. Interacts with telomeric repeats and subtelomeric sequences thereby controlling telomere length and protecting against subtelomeric rearrangement. Maintains telomeric chromatin, which is involved in silencing the expression of genes located at the telomere. Required for mating-type switching. In Saccharomyces cerevisiae (strain ATCC 204508 / S288c) (Baker's yeast), this protein is ATP-dependent DNA helicase II subunit 1 (YKU70).